Here is a 397-residue protein sequence, read N- to C-terminus: Multidrug resistance protein MdtH (397 aa).

11 helical membrane-spanning segments follow: residues 11-31, 32-52, 71-91, 94-114, 137-157, 163-183, 211-231, 242-262, 291-311, 340-360, and 366-386; these read WFLA…MPMI, SLRF…ALGL, FGAR…FASL, AQSG…GCLF, LLMM…SWLL, YVCL…LLIL, LVLI…IFPI, AVGW…YPLA, FANT…GIVI, LALG…YAML, and LPWL…VNCF.

Belongs to the major facilitator superfamily. DHA1 family. MdtH (TC 2.A.1.2.21) subfamily.

The protein resides in the cell inner membrane. In Aeromonas hydrophila subsp. hydrophila (strain ATCC 7966 / DSM 30187 / BCRC 13018 / CCUG 14551 / JCM 1027 / KCTC 2358 / NCIMB 9240 / NCTC 8049), this protein is Multidrug resistance protein MdtH.